Consider the following 627-residue polypeptide: MALARDAKLESDTLQVLQDVANRLRIHSIRATCACSSGHPTSCCSVAEIMAVLFFHTMRYKQADPEHPDNDRFVLSKGHAAPILYAVWVEVGRICESDLLNLRKIHCDLEGHPTPRLSFVDVATGSLGQGLGAACGMAYTGKYFDKASYRVFCLMGDGESSEGSVWEALAFASHYNLDNLVAIFDVNRLGQSGTAPLEHCTAVYEKRCQAFGWNTYVVDGHDVEALCQAFWKAAQVKNKPTALIAKTFKGRGIPNVEDAENWHGKPMPKDRADGIVKLIENRIQTNRNLTPKPPIEDSPRISMSNTKMTSLPVYKLGDMIATREAYGLALAKLGQSNQRVIVLDGDTKNSTFSEVFKKEHPERFIECFIAEQNMVSVALGCATRGRTIAFVSTFAAFLTRAFDQIRMGAISQTNINFVGSHCGVSVGEDGPSQMALEDLAMFRSIPNCTVFYPSDAVSTEHAVYLAANTKGMCFIRTTRPKTAVIYTAEENFVIGQAKVIRQSAVDKVTVIGAGVTLHEALVAAEELSQQGIFIRVIDLFTIKPLDAVTIIQSAKATGGQIITVEDHYREGGIGEAVCAAISREPDIVVRQLAVTEVPRSGKPSELLDMFGISARHIIAAVKDTVMK.

Substrate is bound at residue histidine 39. Thiamine diphosphate is bound by residues serine 42, histidine 79, and 125 to 127 (GSL). Aspartate 157 is a Mg(2+) binding site. Thiamine diphosphate contacts are provided by glycine 158 and asparagine 187. Residues asparagine 187 and leucine 189 each contribute to the Mg(2+) site. 2 residues coordinate thiamine diphosphate: lysine 249 and histidine 263. Substrate contacts are provided by histidine 263, arginine 323, and serine 350. Positions 371 and 397 each coordinate thiamine diphosphate. The active-site Proton donor is the glutamate 371. 2 residues coordinate substrate: histidine 421 and aspartate 429. Position 433 (glutamine 433) interacts with thiamine diphosphate. Arginine 479 is a binding site for substrate.

It belongs to the transketolase family. Homodimer. It depends on Mg(2+) as a cofactor. Ca(2+) is required as a cofactor. Requires Mn(2+) as cofactor. Co(2+) serves as cofactor. The cofactor is thiamine diphosphate.

It catalyses the reaction D-sedoheptulose 7-phosphate + D-glyceraldehyde 3-phosphate = aldehydo-D-ribose 5-phosphate + D-xylulose 5-phosphate. Plays an essential role in total transketolase activity and cell proliferation in cancer cells; after transfection with anti-TKTL1 siRNA, total transketolase activity dramatically decreases and proliferation was significantly inhibited in cancer cells. Plays a pivotal role in carcinogenesis. The sequence is that of Transketolase-like protein 2 (Tktl2) from Mus musculus (Mouse).